A 305-amino-acid polypeptide reads, in one-letter code: UDP-3-O-acyl-N-acetylglucosamine deacetylase (305 aa).

Residues histidine 78, histidine 237, and aspartate 241 each contribute to the Zn(2+) site. Histidine 264 (proton donor) is an active-site residue.

The protein belongs to the LpxC family. The cofactor is Zn(2+).

It catalyses the reaction a UDP-3-O-[(3R)-3-hydroxyacyl]-N-acetyl-alpha-D-glucosamine + H2O = a UDP-3-O-[(3R)-3-hydroxyacyl]-alpha-D-glucosamine + acetate. It functions in the pathway glycolipid biosynthesis; lipid IV(A) biosynthesis; lipid IV(A) from (3R)-3-hydroxytetradecanoyl-[acyl-carrier-protein] and UDP-N-acetyl-alpha-D-glucosamine: step 2/6. Functionally, catalyzes the hydrolysis of UDP-3-O-myristoyl-N-acetylglucosamine to form UDP-3-O-myristoylglucosamine and acetate, the committed step in lipid A biosynthesis. The protein is UDP-3-O-acyl-N-acetylglucosamine deacetylase of Burkholderia ambifaria (strain MC40-6).